Reading from the N-terminus, the 276-residue chain is Rhomboid protease GlpG (276 aa).

The next 6 membrane-spanning stretches (helical) occupy residues 94 to 114 (GPVT…MQIL), 142 to 162 (ALMH…WYLG), 169 to 189 (LGSG…GYVQ), 192 to 212 (FSGP…GYVW), 229 to 249 (LIIF…GMSM), and 250 to 270 (ANGA…VDSL). S201 serves as the catalytic Nucleophile. H254 is a catalytic residue.

Belongs to the peptidase S54 family.

The protein localises to the cell inner membrane. It carries out the reaction Cleaves type-1 transmembrane domains using a catalytic dyad composed of serine and histidine that are contributed by different transmembrane domains.. Rhomboid-type serine protease that catalyzes intramembrane proteolysis. The protein is Rhomboid protease GlpG of Shigella boydii serotype 4 (strain Sb227).